The sequence spans 488 residues: Inosine-5'-monophosphate dehydrogenase (488 aa).

CBS domains follow at residues 95-153 (VITN…SMKI) and 157-214 (MTKE…PNSS). NAD(+)-binding positions include D251 and 301–303 (GIG). K(+) contacts are provided by G303 and G305. S306 provides a ligand contact to IMP. Residue C308 coordinates K(+). The active-site Thioimidate intermediate is C308. IMP-binding positions include 341-343 (DGG), 364-365 (GS), and 388-392 (YRGMG). Residue R404 is the Proton acceptor of the active site. E416 serves as a coordination point for IMP. K(+) is bound by residues E470, S471, and H472.

Belongs to the IMPDH/GMPR family. As to quaternary structure, homotetramer. It depends on K(+) as a cofactor.

It catalyses the reaction IMP + NAD(+) + H2O = XMP + NADH + H(+). The protein operates within purine metabolism; XMP biosynthesis via de novo pathway; XMP from IMP: step 1/1. With respect to regulation, mycophenolic acid (MPA) is a non-competitive inhibitor that prevents formation of the closed enzyme conformation by binding to the same site as the amobile flap. In contrast, mizoribine monophosphate (MZP) is a competitive inhibitor that induces the closed conformation. MPA is a potent inhibitor of mammalian IMPDHs but a poor inhibitor of the bacterial enzymes. MZP is a more potent inhibitor of bacterial IMPDH. Catalyzes the conversion of inosine 5'-phosphate (IMP) to xanthosine 5'-phosphate (XMP), the first committed and rate-limiting step in the de novo synthesis of guanine nucleotides, and therefore plays an important role in the regulation of cell growth. This chain is Inosine-5'-monophosphate dehydrogenase, found in Bacillus subtilis (strain 168).